Consider the following 655-residue polypeptide: Carboxypeptidase S1 homolog B (655 aa).

A signal peptide spans 1–21; sequence MRPFARAALCLLAAAGHLAQA. A disulfide bridge links C51 with C123. N-linked (GlcNAc...) asparagine glycosylation is found at N130, N163, and N186. S240 is an active-site residue. N-linked (GlcNAc...) asparagine glycans are attached at residues N266, N302, and N311. 2 disulfides stabilise this stretch: C328/C364 and C335/C357. N414 carries an N-linked (GlcNAc...) asparagine glycan. The active site involves D459. A substrate-binding site is contributed by C462. N-linked (GlcNAc...) asparagine glycans are attached at residues N475, N493, and N506. The active site involves H517. Substrate is bound at residue E518. N-linked (GlcNAc...) asparagine glycans are attached at residues N598 and N612. Residue G631 is the site of GPI-anchor amidated glycine attachment. Positions 632–655 are cleaved as a propeptide — removed in mature form; that stretch reads AALVSGRIKFHVHVIKSFDYYIFI.

The protein belongs to the peptidase S10 family.

The protein localises to the cell membrane. It carries out the reaction Preferential release of a C-terminal arginine or lysine residue.. Its function is as follows. Extracellular serine carboxypeptidase that contributes to pathogenicity. The sequence is that of Carboxypeptidase S1 homolog B (SCPB) from Arthroderma otae (strain ATCC MYA-4605 / CBS 113480) (Microsporum canis).